A 174-amino-acid polypeptide reads, in one-letter code: MLVPHDRMVGNKRRGTMRVLGIGTDLVYMPRVVELLRRMPAGSGAHARFAGKFMHARERAGALGAKDQARYVAGVWAAKEALYKAVAGADAPPAATLYRACYKEADAVGRPTLQVDAGELQRAGHMRFWEERLAGTRFLLSVSHDEDYLVAFVCHVADETFRAPDERQRITKNS.

This sequence belongs to the P-Pant transferase superfamily. AcpS family.

It localises to the mitochondrion. The catalysed reaction is apo-[ACP] + CoA = holo-[ACP] + adenosine 3',5'-bisphosphate + H(+). Its function is as follows. Transfers the 4'-phosphopantetheine moiety from coenzyme A to a Ser of mitochondrial acyl-carrier-protein. The chain is Mitochondrial holo-[acyl-carrier-protein] synthase (PPT2) from Eremothecium gossypii (strain ATCC 10895 / CBS 109.51 / FGSC 9923 / NRRL Y-1056) (Yeast).